We begin with the raw amino-acid sequence, 242 residues long: ATP-dependent dethiobiotin synthetase BioD (242 aa).

Residue 12 to 17 (EVGKTV) participates in ATP binding. A Mg(2+)-binding site is contributed by threonine 16. Lysine 37 is an active-site residue. Serine 41 contributes to the substrate binding site. Residues aspartate 51 and 112-115 (EGAG) contribute to the ATP site. Residues aspartate 51 and glutamate 112 each contribute to the Mg(2+) site.

The protein belongs to the dethiobiotin synthetase family. In terms of assembly, homodimer. Requires Mg(2+) as cofactor.

It is found in the cytoplasm. It catalyses the reaction (7R,8S)-7,8-diammoniononanoate + CO2 + ATP = (4R,5S)-dethiobiotin + ADP + phosphate + 3 H(+). Its pathway is cofactor biosynthesis; biotin biosynthesis; biotin from 7,8-diaminononanoate: step 1/2. Its function is as follows. Catalyzes a mechanistically unusual reaction, the ATP-dependent insertion of CO2 between the N7 and N8 nitrogen atoms of 7,8-diaminopelargonic acid (DAPA, also called 7,8-diammoniononanoate) to form a ureido ring. In Bacillus cereus (strain G9842), this protein is ATP-dependent dethiobiotin synthetase BioD.